A 308-amino-acid chain; its full sequence is 34.2 kDa protein in rubredoxin operon (308 aa).

A disulfide bond links Cys136 and Cys139. 268-278 (TNIKGVFAAGD) lines the FAD pocket.

Belongs to the class-II pyridine nucleotide-disulfide oxidoreductase family.

The chain is 34.2 kDa protein in rubredoxin operon from Clostridium pasteurianum.